A 589-amino-acid polypeptide reads, in one-letter code: MDEIDNIILHSLRQIECNLDEEVISLDDLSPSMLVQVVSKCISLIDPGLELPRTLPPGMAQRFTATASLAEACRTIGYRRDIGYQTFLYSNVAEVRRVLMFLVEKLPKEAADKTSGSGQPVDSATQLENRILSSLQSQLQAPWMPEFCQVGRPEGLSTTSGGESPAQIAFRRFIPRKISVPFVTQGDVAAEVKEFWSRRNLDCLDEGSLVPSLIAANDGAIKTNAKGAIDEVDRQVKLPAINEKLLQYYSKGGTKHRLAEPSGAAASSGTTEKVVLNNITVETKPGKTPLESLQEEIDALQQEIVQHSEEGVQLESSRKETDESIEEYRKTIVRLKEEKKIKERTHILLEDPEVNVKKLEAIIAAGGERMKKLQDQWDAHRIPLVDTLEAYRLKNSDKLSKSQQVLDQIESTRQKCEEVVIDLQTKGAMYARLQKEFEKLNKTVSRTAYTSRILEIIGNIRKQKNGIDQILQDTRSLQKEINNITGQLDRQFTVTDDLIFRNAKKDEHSKRAYKLLVTLHSDCEELIKLVQETGAIKREVRDLEDQIENEKGRNTAANLAQITHDLTEMQNESQRLEESIRRMEVTSRQ.

Coiled coils occupy residues 287-426 and 523-589; these read KTPL…LQTK and CEEL…TSRQ. Positions 568-589 are disordered; sequence EMQNESQRLEESIRRMEVTSRQ. Basic and acidic residues predominate over residues 574–589; that stretch reads QRLEESIRRMEVTSRQ.

Belongs to the CCDC22 family.

The polypeptide is Coiled-coil domain-containing protein 22 homolog (Aedes aegypti (Yellowfever mosquito)).